A 760-amino-acid chain; its full sequence is uncharacterized protein (760 aa).

A signal peptide spans Met-1 to Ala-20. Cys-21 carries the N-palmitoyl cysteine lipid modification. A lipid anchor (S-diacylglycerol cysteine) is attached at Cys-21. 3 disordered regions span residues Glu-221–Lys-243, Ala-272–Asp-315, and Ile-705–Ala-741. The segment covering Ala-272–Glu-284 has biased composition (basic and acidic residues). Residues Lys-300–Thr-312 show a composition bias toward polar residues. Positions Ile-705 to Asp-721 are enriched in basic and acidic residues.

Belongs to the MG185/MG260 family.

It is found in the cell membrane. This is an uncharacterized protein from Mycoplasma pneumoniae (strain ATCC 29342 / M129 / Subtype 1) (Mycoplasmoides pneumoniae).